The chain runs to 839 residues: Katanin p80 WD40 repeat-containing subunit B1 homolog KTN80.3 (839 aa).

WD repeat units follow at residues 14–54 (AHSA…AILS), 57–96 (GHSS…VVRT), 99–138 (GHRS…CIHT), 141–182 (GHTR…HEFK), 184–222 (HEGK…LIGS), 225–265 (TETT…DGVD), and 267–304 (GWSN…TEPM). Residues 115-131 (FFASGSLDTNLKIWDIR) carry the DWD box motif. 4 disordered regions span residues 303-340 (PMSG…LGKL), 357-435 (GKLS…KSAS), 501-561 (LQSK…RTNK), and 575-648 (SLVR…PSNM). Polar residues-rich tracts occupy residues 307-334 (GATQ…NSSK), 375-385 (TGRSSVSQSSD), 411-435 (TLSS…KSAS), 501-533 (LQSK…QSQP), 589-602 (DLIS…SSPT), and 630-648 (VSSS…PSNM).

The protein belongs to the WD repeat KATNB1 family. In terms of assembly, component of KTN80-KTN1 complexes composed of a hexamer of KTN1-KTN80 heterodimers that sense microtubule (MT) geometry to confer precise MT severing. Interacts directly with AAA1/KTN1 and KTN80.1, and weakly with KTN80.4. As to expression, expressed in siliques, flowers, leaves, stems and roots.

The protein localises to the cytoplasm. It localises to the cytoskeleton. Its function is as follows. May participate in a complex which severs microtubules in an ATP-dependent manner. Microtubule severing may promote rapid reorganization of cellular microtubule arrays. Confers precision to microtubule (MT) severing by specific targeting of KTN1 to MT cleavage sites such as crossover or branching nucleation sites. Together with other KTN80s, regulates cell elongation by modulating MT organization. In Arabidopsis thaliana (Mouse-ear cress), this protein is Katanin p80 WD40 repeat-containing subunit B1 homolog KTN80.3.